The primary structure comprises 514 residues: Pleiotropic regulator 1 (514 aa).

The residue at position 1 (M1) is an N-acetylmethionine. The residue at position 119 (S119) is a Phosphoserine. Residues 135 to 160 form a disordered region; the sequence is KADANRTAPSGSEYRHPGASDRPQPT. Phosphoserine is present on S201. 7 WD repeats span residues 202 to 241, 244 to 283, 286 to 325, 328 to 367, 370 to 410, 411 to 449, and 460 to 499; these read GHLG…LKLS, GHIS…VIRH, GHLS…SVHT, GHTN…TRVT, NHKK…QNLS, GHNA…NFQR, and DSES…TEET. Position 391 is a phosphoserine (S391).

It belongs to the WD repeat PRL1/PRL2 family. In terms of assembly, identified in the spliceosome C complex. Component of the PRP19-CDC5L splicing complex composed of a core complex comprising a homotetramer of PRPF19, CDC5L, PLRG1 and BCAS2, and at least three less stably associated proteins CTNNBL1, CWC15 and HSPA8. Interacts (via its WD40 repeat domain) directly with CDC5L (via its C-terminal); the interaction is required for mRNA splicing but not for spliceosome assembly. Component of the minor spliceosome, which splices U12-type introns. Within this complex, interacts with CRIPT. Also interacts directly in the complex with BCAS2 and PRPF19. Interacts with USB1.

Its subcellular location is the nucleus. It is found in the nucleus speckle. In terms of biological role, involved in pre-mRNA splicing as component of the spliceosome. Component of the PRP19-CDC5L complex that forms an integral part of the spliceosome and is required for activating pre-mRNA splicing. As a component of the minor spliceosome, involved in the splicing of U12-type introns in pre-mRNAs. This is Pleiotropic regulator 1 (PLRG1) from Homo sapiens (Human).